A 216-amino-acid chain; its full sequence is Large ribosomal subunit protein uL1 (216 aa).

This sequence belongs to the universal ribosomal protein uL1 family. Component of the large ribosomal subunit.

Its subcellular location is the cytoplasm. Functionally, component of the large ribosomal subunit. The ribosome is a large ribonucleoprotein complex responsible for the synthesis of proteins in the cell. The chain is Large ribosomal subunit protein uL1 (rpl10a) from Ictalurus punctatus (Channel catfish).